The primary structure comprises 190 residues: E3 ubiquitin-protein ligase RNF4 (190 aa).

The segment at 1 to 16 (MSTRKRRGGAINSRQA) is required for ubiquitination activity. Residues 1–29 (MSTRKRRGGAINSRQAQKRTREATSTPEI) are disordered. Positions 4–61 (RKRRGGAINSRQAQKRTREATSTPEISLEAEPIELVETAGDEIVDLTCESLEPVVVDL) are mediates interaction with TRPS1. 4 short sequence motifs (SUMO interaction motif) span residues 36–39 (IELV), 46–49 (IVDL), 57–59 (VVV), and 67–70 (VVIV). Phosphoserine occurs at positions 94 and 95. Zn(2+)-binding residues include C132, C135, C154, H156, C159, C162, C173, and C176. The RING-type zinc finger occupies 132-177 (CPICMDGYSEIVQNGRLIVSTECGHVFCSQCLRDSLKNANTCPTCR).

Homodimer (via RING-type zinc finger domain). Interacts with GSC2. Interacts with AR/the androgen receptor and TBP. Interacts with TCF20. Interacts with PATZ1. Interacts with TRPS1; negatively regulates TRPS1 transcriptional repressor activity. Interacts with PML (isoform PML-1, isoform PML-2, isoform PML-3, isoform PML-4, isoform PML-5 and isoform PML-6). Interacts with PRDM1/Blimp-1. Post-translationally, sumoylated; conjugated by one or two SUMO1 moieties. Autoubiquitinated. Widely expressed at low levels in many tissues; highly expressed in testis.

The protein resides in the cytoplasm. It localises to the nucleus. Its subcellular location is the PML body. The enzyme catalyses S-ubiquitinyl-[E2 ubiquitin-conjugating enzyme]-L-cysteine + [acceptor protein]-L-lysine = [E2 ubiquitin-conjugating enzyme]-L-cysteine + N(6)-ubiquitinyl-[acceptor protein]-L-lysine.. It participates in protein modification; protein ubiquitination. Functionally, E3 ubiquitin-protein ligase which binds polysumoylated chains covalently attached to proteins and mediates 'Lys-6'-, 'Lys-11'-, 'Lys-48'- and 'Lys-63'-linked polyubiquitination of those substrates and their subsequent targeting to the proteasome for degradation. Regulates the degradation of several proteins including PML and the transcriptional activator PEA3. Involved in chromosome alignment and spindle assembly, it regulates the kinetochore CENPH-CENPI-CENPK complex by targeting polysumoylated CENPI to proteasomal degradation. Regulates the cellular responses to hypoxia and heat shock through degradation of respectively EPAS1 and PARP1. Alternatively, it may also bind DNA/nucleosomes and have a more direct role in the regulation of transcription for instance enhancing basal transcription and steroid receptor-mediated transcriptional activation. Catalyzes ubiquitination of sumoylated PARP1 in response to PARP1 trapping to chromatin, leading to PARP1 removal from chromatin by VCP/p97. The polypeptide is E3 ubiquitin-protein ligase RNF4 (Homo sapiens (Human)).